Reading from the N-terminus, the 2082-residue chain is Polyketide synthase ThaQ (2082 aa).

The interval 398–468 (NDARRAGSAR…DSAHDSAHAA (71 aa)) is disordered. 3 stretches are compositionally biased toward basic and acidic residues: residues 399 to 411 (DARR…RDAR), 419 to 430 (HGARHEAAHDAQ), and 439 to 468 (ADAH…AHAA). A Carrier 1 domain is found at 470-546 (ALRREGRAYL…ALLDHLLAAH (77 aa)). S507 carries the O-(pantetheine 4'-phosphoryl)serine modification. Low complexity-rich tracts occupy residues 560–582 (APAR…RAAP) and 593–605 (DTPS…APAR). The interval 560-655 (APARGVGARA…RYAPRAPHPD (96 aa)) is disordered. Over residues 606 to 631 (PDQPAPSGPPAQPAQPAPRADTPPPA) the composition is skewed to pro residues. Positions 658–1077 (AEPVAIIGIS…GVNAHVVLEE (420 aa)) constitute a Ketosynthase family 3 (KS3) domain. Disordered regions lie at residues 1250–1269 (APGT…EAAE) and 1603–1653 (ARGP…VKSD). Low complexity-rich tracts occupy residues 1256 to 1269 (ASAG…EAAE) and 1612 to 1624 (SPDA…RAQA). Residues 1640-1653 (ADSKAGPKSEVKSD) are compositionally biased toward basic and acidic residues. The Carrier 2 domain occupies 1669–1743 (ASVAASVEDA…ALVRAVAEAV (75 aa)). S1703 is subject to O-(pantetheine 4'-phosphoryl)serine. Residues 1792 to 2022 (PRVVLIPGLG…GAGHAVFLTH (231 aa)) enclose the AB hydrolase-1 domain. Residues 2045 to 2067 (GAAESVESVEATEAAEAARSPAV) are compositionally biased toward low complexity. The interval 2045–2082 (GAAESVESVEATEAAEAARSPAVARRRATDDAPVGSDA) is disordered.

The cofactor is pantetheine 4'-phosphate.

Its subcellular location is the cytoplasm. It participates in antibiotic biosynthesis. Involved in production of the polyketide antibiotic thailandamide. The protein is Polyketide synthase ThaQ of Burkholderia thailandensis (strain ATCC 700388 / DSM 13276 / CCUG 48851 / CIP 106301 / E264).